The primary structure comprises 181 residues: ATP-dependent protease subunit HslV (181 aa).

Threonine 11 is an active-site residue. Residues alanine 166, cysteine 169, and threonine 172 each contribute to the Na(+) site.

The protein belongs to the peptidase T1B family. HslV subfamily. As to quaternary structure, a double ring-shaped homohexamer of HslV is capped on each side by a ring-shaped HslU homohexamer. The assembly of the HslU/HslV complex is dependent on binding of ATP.

Its subcellular location is the cytoplasm. The catalysed reaction is ATP-dependent cleavage of peptide bonds with broad specificity.. Allosterically activated by HslU binding. Its function is as follows. Protease subunit of a proteasome-like degradation complex believed to be a general protein degrading machinery. The polypeptide is ATP-dependent protease subunit HslV (Chlorobaculum tepidum (strain ATCC 49652 / DSM 12025 / NBRC 103806 / TLS) (Chlorobium tepidum)).